The chain runs to 96 residues: Co-chaperonin GroES (96 aa).

This sequence belongs to the GroES chaperonin family. Heptamer of 7 subunits arranged in a ring. Interacts with the chaperonin GroEL.

Its subcellular location is the cytoplasm. Its function is as follows. Together with the chaperonin GroEL, plays an essential role in assisting protein folding. The GroEL-GroES system forms a nano-cage that allows encapsulation of the non-native substrate proteins and provides a physical environment optimized to promote and accelerate protein folding. GroES binds to the apical surface of the GroEL ring, thereby capping the opening of the GroEL channel. The sequence is that of Co-chaperonin GroES from Aggregatibacter actinomycetemcomitans (Actinobacillus actinomycetemcomitans).